The primary structure comprises 199 residues: NAD(P)H dehydrogenase (quinone) (199 aa).

The Flavodoxin-like domain maps to 4 to 190; the sequence is VLVLYYSAYG…DGARFQGKRV (187 aa). FMN-binding positions include 10-15 and 78-80; these read SAYGHM and TRY. Residue tyrosine 12 coordinates NAD(+). Residue tryptophan 98 coordinates substrate. Residues 113–119 and histidine 134 contribute to the FMN site; that span reads STATQHG. The disordered stretch occupies residues 157 to 185; that stretch reads GGAPYGMTTTADGDGSRQPSEQELDGARF. Positions 163 to 177 are enriched in polar residues; sequence MTTTADGDGSRQPSE.

This sequence belongs to the WrbA family. Requires FMN as cofactor.

It carries out the reaction a quinone + NADH + H(+) = a quinol + NAD(+). The catalysed reaction is a quinone + NADPH + H(+) = a quinol + NADP(+). The sequence is that of NAD(P)H dehydrogenase (quinone) from Brucella anthropi (strain ATCC 49188 / DSM 6882 / CCUG 24695 / JCM 21032 / LMG 3331 / NBRC 15819 / NCTC 12168 / Alc 37) (Ochrobactrum anthropi).